Consider the following 524-residue polypeptide: BEL1-like homeodomain protein 3 (524 aa).

The interval 171–187 (SRYLKPTQQLLDEVVSV) is SR/KY domain. Basic and acidic residues-rich tracts occupy residues 195–205 (NKKMKNDKGQD) and 216–235 (EDDKSQSQELSPSERQELQS). A disordered region spans residues 195 to 236 (NKKMKNDKGQDFHNGSSDNITEDDKSQSQELSPSERQELQSK). The tract at residues 229–300 (ERQELQSKKS…CLRDAIKEQI (72 aa)) is BELL domain. The segment at residues 346 to 408 (AWRPQRGLPE…NARVRLWKPM (63 aa)) is a DNA-binding region (homeobox). The tract at residues 429 to 463 (QDTKKMQETSQLKHEDSSSSQQQNQGNNNNNIPYT) is disordered. The span at 430-445 (DTKKMQETSQLKHEDS) shows a compositional bias: basic and acidic residues. The span at 446-459 (SSSQQQNQGNNNNN) shows a compositional bias: low complexity.

It belongs to the TALE/BELL homeobox family. May form heterodimeric complex with the TALE/KNOX protein STM. Interacts with OFP1, OFP2, OFP3, OFP4, OFP5 and OFP15.

It localises to the nucleus. In terms of biological role, transcription factor that is responsive of the nuclear import of SHOOT MERISTEMLESS (STM). This Arabidopsis thaliana (Mouse-ear cress) protein is BEL1-like homeodomain protein 3 (BLH3).